Reading from the N-terminus, the 248-residue chain is 2,3-bisphosphoglycerate-dependent phosphoglycerate mutase (248 aa).

Residues 8–15, 21–22, Arg-60, 87–90, Lys-98, 114–115, and 183–184 each bind substrate; these read RHGESTWN, TG, EKHY, RR, and GN. His-9 (tele-phosphohistidine intermediate) is an active-site residue. The Proton donor/acceptor role is filled by Glu-87.

It belongs to the phosphoglycerate mutase family. BPG-dependent PGAM subfamily.

It catalyses the reaction (2R)-2-phosphoglycerate = (2R)-3-phosphoglycerate. It functions in the pathway carbohydrate degradation; glycolysis; pyruvate from D-glyceraldehyde 3-phosphate: step 3/5. Its function is as follows. Catalyzes the interconversion of 2-phosphoglycerate and 3-phosphoglycerate. The polypeptide is 2,3-bisphosphoglycerate-dependent phosphoglycerate mutase (Elusimicrobium minutum (strain Pei191)).